The following is a 338-amino-acid chain: Glycerol-3-phosphate dehydrogenase [NAD(P)+] (338 aa).

NADPH is bound by residues W20 and K110. 3 residues coordinate sn-glycerol 3-phosphate: K110, G141, and S143. Residue A145 coordinates NADPH. Sn-glycerol 3-phosphate is bound by residues K197, D250, S260, R261, and N262. The Proton acceptor role is filled by K197. Residue R261 coordinates NADPH. E287 contributes to the NADPH binding site.

The protein belongs to the NAD-dependent glycerol-3-phosphate dehydrogenase family.

The protein resides in the cytoplasm. It catalyses the reaction sn-glycerol 3-phosphate + NAD(+) = dihydroxyacetone phosphate + NADH + H(+). The catalysed reaction is sn-glycerol 3-phosphate + NADP(+) = dihydroxyacetone phosphate + NADPH + H(+). Its pathway is membrane lipid metabolism; glycerophospholipid metabolism. In terms of biological role, catalyzes the reduction of the glycolytic intermediate dihydroxyacetone phosphate (DHAP) to sn-glycerol 3-phosphate (G3P), the key precursor for phospholipid synthesis. This is Glycerol-3-phosphate dehydrogenase [NAD(P)+] from Aster yellows witches'-broom phytoplasma (strain AYWB).